Reading from the N-terminus, the 344-residue chain is uncharacterized protein (344 aa).

The next 5 helical transmembrane spans lie at phenylalanine 53 to tryptophan 73, tryptophan 84 to isoleucine 104, isoleucine 153 to leucine 173, phenylalanine 189 to leucine 209, and isoleucine 275 to phenylalanine 295.

This sequence belongs to the steroid 5-alpha reductase family.

Its subcellular location is the endoplasmic reticulum membrane. This is an uncharacterized protein from Schizosaccharomyces pombe (strain 972 / ATCC 24843) (Fission yeast).